The following is a 266-amino-acid chain: Glutamate racemase (266 aa).

Residues 9–10 and 41–42 contribute to the substrate site; these read DS and YG. Cys72 functions as the Proton donor/acceptor in the catalytic mechanism. 73-74 provides a ligand contact to substrate; it reads NT. The active-site Proton donor/acceptor is the Cys184. Residue 185–186 coordinates substrate; it reads TH.

The protein belongs to the aspartate/glutamate racemases family. Homodimer.

The catalysed reaction is L-glutamate = D-glutamate. It participates in cell wall biogenesis; peptidoglycan biosynthesis. Functionally, provides the (R)-glutamate required for cell wall biosynthesis. The sequence is that of Glutamate racemase from Staphylococcus aureus (strain MRSA252).